The chain runs to 288 residues: Protein shisa-2 (288 aa).

An N-terminal signal peptide occupies residues 1-23 (MWLEGSPLAVLAAVSFLLSVLAA). Residues 24–110 (AQGSGEYCHG…DSTAVPIYVP (87 aa)) lie on the Extracellular side of the membrane. Residues 111 to 131 (FLIVGSVFVAFIIVGSLVAIC) traverse the membrane as a helical segment. The Cytoplasmic segment spans residues 132–288 (CCRCLRPKQE…EQMMYPAVTV (157 aa)). The segment covering 161–188 (SSASTSRGSSSRQSSTAASSSSSANSGA) has biased composition (low complexity). Positions 161–198 (SSASTSRGSSSRQSSTAASSSSSANSGARPPPTRSQTN) are disordered.

The protein belongs to the shisa family. As to quaternary structure, interacts with fzd8 and fgfr1.

The protein resides in the endoplasmic reticulum membrane. Functionally, plays an essential role in the maturation of presomitic mesoderm cells by individual attenuation of both fgf and wnt signaling. Inhibits both wnt and fgf signaling through the regulation of protein maturation and cell surface transportation of their receptors within the endoplasmic reticulum. This is Protein shisa-2 (shisa2) from Xenopus laevis (African clawed frog).